Reading from the N-terminus, the 209-residue chain is MTTKGILGKKVGMTQVFTESGELVPVTVVEVQPNVVLQVKTVENDGYEAIQLGVDDKREVLTNKPAQGHAAKAKTTPKRFIREIRNVELGDYTVGDEVKADIFAAGDAVDVTGITKGHGYQGNIHKDGQSRGPMAHGSRYHRRPGSMGAIINRVFKGKKLPGRMGNHQRTMQNLQIVRADVENNVLLIKGNVPGANKSFVTVKTSVKSK.

Belongs to the universal ribosomal protein uL3 family. In terms of assembly, part of the 50S ribosomal subunit. Forms a cluster with proteins L14 and L19.

Its function is as follows. One of the primary rRNA binding proteins, it binds directly near the 3'-end of the 23S rRNA, where it nucleates assembly of the 50S subunit. This Lactiplantibacillus plantarum (strain ATCC BAA-793 / NCIMB 8826 / WCFS1) (Lactobacillus plantarum) protein is Large ribosomal subunit protein uL3.